The following is a 200-amino-acid chain: Recombination protein RecR (200 aa).

The segment at 59–74 (CGTCGSLDVTDPCAVC) adopts a C4-type zinc-finger fold. A Toprim domain is found at 82–177 (RLLCVVEEVG…PVTMLARGVP (96 aa)).

Belongs to the RecR family.

Its function is as follows. May play a role in DNA repair. It seems to be involved in an RecBC-independent recombinational process of DNA repair. It may act with RecF and RecO. The chain is Recombination protein RecR from Caulobacter vibrioides (strain ATCC 19089 / CIP 103742 / CB 15) (Caulobacter crescentus).